The chain runs to 209 residues: Potassium-transporting ATPase KdpC subunit (209 aa).

A helical transmembrane segment spans residues 11–31 (MILALTVLTGLAYPLAVTAVA). Positions 188 to 209 (AQAPTPRQPEPGHPEPGRPEVR) are disordered. Residues 197–209 (EPGHPEPGRPEVR) are compositionally biased toward basic and acidic residues.

It belongs to the KdpC family. In terms of assembly, the system is composed of three essential subunits: KdpA, KdpB and KdpC.

It localises to the cell inner membrane. Its function is as follows. Part of the high-affinity ATP-driven potassium transport (or Kdp) system, which catalyzes the hydrolysis of ATP coupled with the electrogenic transport of potassium into the cytoplasm. This subunit acts as a catalytic chaperone that increases the ATP-binding affinity of the ATP-hydrolyzing subunit KdpB by the formation of a transient KdpB/KdpC/ATP ternary complex. This is Potassium-transporting ATPase KdpC subunit from Rhodospirillum centenum (strain ATCC 51521 / SW).